The chain runs to 149 residues: Oocyte-expressed protein homolog (149 aa).

The disordered stretch occupies residues 1 to 23 (MVDDAGTAESQRGKQTPADSLEQ). Residues 8 to 18 (AESQRGKQTPA) show a composition bias toward polar residues. A KH; atypical domain is found at 49–110 (PLVFYLEAWL…SVQNRVKSML (62 aa)).

This sequence belongs to the KHDC1 family. As to quaternary structure, component of the subcortical maternal complex (SCMC), at least composed of NLRP5, KHDC3, OOEP, and TLE6. Within the complex, interacts with NLRP5, KHDC3 and TLE6. As part of the SCMC interacts with the SCMC-associated protein NLRP4F. The SCMC may facilitate translocation of its components between the nuclear and cytoplasmic compartments. Forms a scaffold complex with KHDC3/FILIA, and interacts with BLM and TRIM25 at DNA replication forks.

The protein resides in the cytoplasm. It is found in the nucleus. In terms of biological role, component of the subcortical maternal complex (SCMC), a multiprotein complex that plays a key role in early embryonic development. The SCMC complex is a structural constituent of cytoplasmic lattices, which consist in fibrous structures found in the cytoplasm of oocytes and preimplantation embryos. They are required to store maternal proteins critical for embryonic development, such as proteins that control epigenetic reprogramming of the preimplantation embryo, and prevent their degradation or activation. As part of the OOEP-KHDC3 scaffold, recruits BLM and TRIM25 to DNA replication forks, thereby promoting the ubiquitination of BLM by TRIM25, enhancing BLM retainment at replication forks and therefore promoting stalled replication fork restart. Positively regulates the homologous recombination-mediated DNA double-strand break (DSB) repair pathway by regulating ATM activation and RAD51 recruitment to DSBs in oocytes. Thereby contributes to oocyte survival and the resumption and completion of meiosis. This Papio anubis (Olive baboon) protein is Oocyte-expressed protein homolog (OOEP).